Reading from the N-terminus, the 200-residue chain is Holliday junction branch migration complex subunit RuvA (200 aa).

Residues 1–63 (MFEYLTGLIT…EDAITLFGFA (63 aa)) are domain I. Positions 64 to 142 (TQAEKRLFTQ…AVQDEVQLDF (79 aa)) are domain II. Residues 143-151 (TAPGPLGPS) form a flexible linker region. The tract at residues 151-200 (SAALQDALAALESLGYTTKQVERVQKQLEGLQGELSTNDYLSQGLKLLSR) is domain III.

This sequence belongs to the RuvA family. In terms of assembly, homotetramer. Forms an RuvA(8)-RuvB(12)-Holliday junction (HJ) complex. HJ DNA is sandwiched between 2 RuvA tetramers; dsDNA enters through RuvA and exits via RuvB. An RuvB hexamer assembles on each DNA strand where it exits the tetramer. Each RuvB hexamer is contacted by two RuvA subunits (via domain III) on 2 adjacent RuvB subunits; this complex drives branch migration. In the full resolvosome a probable DNA-RuvA(4)-RuvB(12)-RuvC(2) complex forms which resolves the HJ.

The protein localises to the cytoplasm. In terms of biological role, the RuvA-RuvB-RuvC complex processes Holliday junction (HJ) DNA during genetic recombination and DNA repair, while the RuvA-RuvB complex plays an important role in the rescue of blocked DNA replication forks via replication fork reversal (RFR). RuvA specifically binds to HJ cruciform DNA, conferring on it an open structure. The RuvB hexamer acts as an ATP-dependent pump, pulling dsDNA into and through the RuvAB complex. HJ branch migration allows RuvC to scan DNA until it finds its consensus sequence, where it cleaves and resolves the cruciform DNA. The chain is Holliday junction branch migration complex subunit RuvA from Limosilactobacillus fermentum (strain NBRC 3956 / LMG 18251) (Lactobacillus fermentum).